The chain runs to 231 residues: Regulatory protein VanRc (231 aa).

In terms of domain architecture, Response regulatory spans 4–117; sequence KIVVVDDEKE…EVVARVKTQL (114 aa). Asp-53 carries the 4-aspartylphosphate modification. The ompR/PhoB-type DNA-binding region spans 132 to 231; sequence VEEYEKDGLI…VWGVGYIIEK (100 aa).

In terms of processing, phosphorylated by VanSc.

It localises to the cytoplasm. In terms of biological role, member of the two-component regulatory system VanSc/VanRc. Binds to the promoter regions of target genes. Activates the transcription of vanC1 and vanXYC in response to vancomycin which results in vancomycin resistance. This chain is Regulatory protein VanRc, found in Enterococcus gallinarum.